The following is a 515-amino-acid chain: Fibril protein (515 aa).

Met1 is subject to Blocked amino end (Met). Helical regions lie at residues 21 to 34 (VKKY…IQHV), 206 to 228 (HKFK…FNLL), 357 to 376 (KIET…AEKC), and 426 to 440 (SNEF…LKDV).

It is found in the cytoplasm. The protein resides in the cytoskeleton. Acts as a cytoskeletal structure involved in the shape and motility of spiroplasmas. The sequence is that of Fibril protein from Spiroplasma citri.